The chain runs to 185 residues: MYIGVISMRYAKALLAYADEKGTEDTVYEEAGILADSFSRIPELRQALDNPVLPAETKLKLICEAAGGGKVSEELKRFVELVLEERREKFLQFMIMSYIDLYRKQKNISVGKITTVCPVAEEVVNRIRALVVEKTHGTVEFKTKIDPKLEGGFIFEIGTYRLDASVANQIKRVKQQFIAKNRRIV.

Belongs to the ATPase delta chain family. As to quaternary structure, F-type ATPases have 2 components, F(1) - the catalytic core - and F(0) - the membrane proton channel. F(1) has five subunits: alpha(3), beta(3), gamma(1), delta(1), epsilon(1). F(0) has three main subunits: a(1), b(2) and c(10-14). The alpha and beta chains form an alternating ring which encloses part of the gamma chain. F(1) is attached to F(0) by a central stalk formed by the gamma and epsilon chains, while a peripheral stalk is formed by the delta and b chains.

It localises to the cell inner membrane. Its function is as follows. F(1)F(0) ATP synthase produces ATP from ADP in the presence of a proton or sodium gradient. F-type ATPases consist of two structural domains, F(1) containing the extramembraneous catalytic core and F(0) containing the membrane proton channel, linked together by a central stalk and a peripheral stalk. During catalysis, ATP synthesis in the catalytic domain of F(1) is coupled via a rotary mechanism of the central stalk subunits to proton translocation. This protein is part of the stalk that links CF(0) to CF(1). It either transmits conformational changes from CF(0) to CF(1) or is implicated in proton conduction. The protein is ATP synthase subunit delta of Phocaeicola vulgatus (strain ATCC 8482 / DSM 1447 / JCM 5826 / CCUG 4940 / NBRC 14291 / NCTC 11154) (Bacteroides vulgatus).